A 196-amino-acid chain; its full sequence is Probable DNA-directed RNA polymerase subunit delta (196 aa).

Residues 14-81 (LSMIEVAHEI…GDNVWGLRSW (68 aa)) enclose the HTH HARE-type domain. Residues 119 to 150 (DDDDVIDYDDDDPEDEDLDNDYDDEDDDDDEG) are compositionally biased toward acidic residues. The segment at 119-196 (DDDDVIDYDD…DADLDEENQD (78 aa)) is disordered. Residues 151–161 (SHELKQYTKDL) are compositionally biased toward basic and acidic residues. Composition is skewed to acidic residues over residues 162 to 176 (DDID…ELAD) and 186 to 196 (SDADLDEENQD).

The protein belongs to the RpoE family. In terms of assembly, RNAP is composed of a core of 2 alpha, a beta and a beta' subunits. The core is associated with a delta subunit and one of several sigma factors.

In terms of biological role, participates in both the initiation and recycling phases of transcription. In the presence of the delta subunit, RNAP displays an increased specificity of transcription, a decreased affinity for nucleic acids, and an increased efficiency of RNA synthesis because of enhanced recycling. The chain is Probable DNA-directed RNA polymerase subunit delta from Ligilactobacillus salivarius (strain UCC118) (Lactobacillus salivarius).